The chain runs to 608 residues: Threonine--tRNA ligase (608 aa).

The interval 1–143 (MRVLYIHAER…SFKPEEGRAD (143 aa)) is editing domain. Catalytic stretches follow at residues 194-490 (PKYL…PRLP) and 195-490 (KYLE…PRLP). The Zn(2+) site is built by cysteine 287, histidine 338, and histidine 459.

The protein belongs to the class-II aminoacyl-tRNA synthetase family. In terms of assembly, homodimer. The cofactor is Zn(2+).

It localises to the cytoplasm. The enzyme catalyses tRNA(Thr) + L-threonine + ATP = L-threonyl-tRNA(Thr) + AMP + diphosphate + H(+). Catalyzes the attachment of threonine to tRNA(Thr) in a two-step reaction: L-threonine is first activated by ATP to form Thr-AMP and then transferred to the acceptor end of tRNA(Thr). Also edits incorrectly charged L-seryl-tRNA(Thr). The sequence is that of Threonine--tRNA ligase from Pyrobaculum aerophilum (strain ATCC 51768 / DSM 7523 / JCM 9630 / CIP 104966 / NBRC 100827 / IM2).